A 616-amino-acid polypeptide reads, in one-letter code: Dihydroxy-acid dehydratase (616 aa).

Mg(2+) is bound at residue Asp81. Position 122 (Cys122) interacts with [2Fe-2S] cluster. 2 residues coordinate Mg(2+): Asp123 and Lys124. At Lys124 the chain carries N6-carboxylysine. Cys195 serves as a coordination point for [2Fe-2S] cluster. Residue Glu491 coordinates Mg(2+). The active-site Proton acceptor is the Ser517.

This sequence belongs to the IlvD/Edd family. Homodimer. The cofactor is [2Fe-2S] cluster. Requires Mg(2+) as cofactor.

The catalysed reaction is (2R)-2,3-dihydroxy-3-methylbutanoate = 3-methyl-2-oxobutanoate + H2O. It carries out the reaction (2R,3R)-2,3-dihydroxy-3-methylpentanoate = (S)-3-methyl-2-oxopentanoate + H2O. The protein operates within amino-acid biosynthesis; L-isoleucine biosynthesis; L-isoleucine from 2-oxobutanoate: step 3/4. It functions in the pathway amino-acid biosynthesis; L-valine biosynthesis; L-valine from pyruvate: step 3/4. Functionally, functions in the biosynthesis of branched-chain amino acids. Catalyzes the dehydration of (2R,3R)-2,3-dihydroxy-3-methylpentanoate (2,3-dihydroxy-3-methylvalerate) into 2-oxo-3-methylpentanoate (2-oxo-3-methylvalerate) and of (2R)-2,3-dihydroxy-3-methylbutanoate (2,3-dihydroxyisovalerate) into 2-oxo-3-methylbutanoate (2-oxoisovalerate), the penultimate precursor to L-isoleucine and L-valine, respectively. This Methylobacillus flagellatus (strain ATCC 51484 / DSM 6875 / VKM B-1610 / KT) protein is Dihydroxy-acid dehydratase.